Here is a 594-residue protein sequence, read N- to C-terminus: Potassium-transporting ATPase potassium-binding subunit (594 aa).

12 helical membrane-spanning segments follow: residues 4–24, 65–85, 136–156, 179–199, 287–307, 314–334, 361–381, 390–410, 413–433, 450–470, 518–538, and 560–580; these read QFFG…PFLG, QYAV…YALQ, ALTV…FALI, LYVL…QGVI, LEML…GEMV, VAIL…TQNA, FGVA…CGAV, AMGG…FGGV, GLYG…LMIG, MVSI…ALAV, LLGL…LALA, and LFIV…YVPA.

It belongs to the KdpA family. In terms of assembly, the system is composed of three essential subunits: KdpA, KdpB and KdpC.

The protein localises to the cell inner membrane. Functionally, part of the high-affinity ATP-driven potassium transport (or Kdp) system, which catalyzes the hydrolysis of ATP coupled with the electrogenic transport of potassium into the cytoplasm. This subunit binds the periplasmic potassium ions and delivers the ions to the membrane domain of KdpB through an intramembrane tunnel. The chain is Potassium-transporting ATPase potassium-binding subunit from Bordetella avium (strain 197N).